Consider the following 463-residue polypeptide: RuvB-like helicase 2 (463 aa).

76 to 83 (GPPSTGKT) is a binding site for ATP.

Belongs to the RuvB family. May form heterododecamers with RVB1. Component of the SWR1 chromatin remodeling complex, the INO80 chromatin remodeling complex, and of the R2TP complex.

The protein localises to the nucleus. The catalysed reaction is ATP + H2O = ADP + phosphate + H(+). DNA helicase which participates in several chromatin remodeling complexes, including the SWR1 and the INO80 complexes. The SWR1 complex mediates the ATP-dependent exchange of histone H2A for the H2A variant HZT1 leading to transcriptional regulation of selected genes by chromatin remodeling. The INO80 complex remodels chromatin by shifting nucleosomes and is involved in DNA repair. Also involved in pre-rRNA processing. This chain is RuvB-like helicase 2 (RVB2), found in Cryptococcus neoformans var. neoformans serotype D (strain JEC21 / ATCC MYA-565) (Filobasidiella neoformans).